Consider the following 365-residue polypeptide: Phospho-N-acetylmuramoyl-pentapeptide-transferase (365 aa).

The next 10 helical transmembrane spans lie at 29–49, 73–93, 97–117, 133–153, 171–191, 202–222, 242–262, 266–286, 291–311, and 341–361; these read VGGL…IIVW, GTPT…VIIW, SNIY…LGLV, ILNK…IMFI, IVCK…VGTS, GLVI…TWVV, LVVV…FNSY, IFMG…VSIL, YLLL…IFQV, and IVVR…VIFI.

This sequence belongs to the glycosyltransferase 4 family. MraY subfamily. The cofactor is Mg(2+).

Its subcellular location is the cell inner membrane. It carries out the reaction UDP-N-acetyl-alpha-D-muramoyl-L-alanyl-gamma-D-glutamyl-meso-2,6-diaminopimeloyl-D-alanyl-D-alanine + di-trans,octa-cis-undecaprenyl phosphate = di-trans,octa-cis-undecaprenyl diphospho-N-acetyl-alpha-D-muramoyl-L-alanyl-D-glutamyl-meso-2,6-diaminopimeloyl-D-alanyl-D-alanine + UMP. It participates in cell wall biogenesis; peptidoglycan biosynthesis. Its function is as follows. Catalyzes the initial step of the lipid cycle reactions in the biosynthesis of the cell wall peptidoglycan: transfers peptidoglycan precursor phospho-MurNAc-pentapeptide from UDP-MurNAc-pentapeptide onto the lipid carrier undecaprenyl phosphate, yielding undecaprenyl-pyrophosphoryl-MurNAc-pentapeptide, known as lipid I. This chain is Phospho-N-acetylmuramoyl-pentapeptide-transferase, found in Blochmanniella floridana.